The following is a 125-amino-acid chain: Conopressin-conophysin, isoform 1 (125 aa).

The first 22 residues, 1–22 (MQMGRPTLLPCLLLLLVLSTQA), serve as a signal peptide directing secretion. A disulfide bridge connects residues C23 and C28. Glycine amide is present on G31. Residues 32–39 (GKRDVHMI) constitute a propeptide that is removed on maturation. 7 cysteine pairs are disulfide-bonded: C45-C85, C48-C59, C53-C75, C60-C65, C92-C112, C104-C124, and C113-C118.

It belongs to the vasopressin/oxytocin family. In terms of tissue distribution, expressed by the venom gland.

The protein resides in the secreted. In terms of biological role, targets vasopressin-oxytocin related receptors. In Conus monile (Necklace cone), this protein is Conopressin-conophysin, isoform 1.